Consider the following 122-residue polypeptide: Large ribosomal subunit protein uL14 (122 aa).

The protein belongs to the universal ribosomal protein uL14 family. In terms of assembly, part of the 50S ribosomal subunit. Forms a cluster with proteins L3 and L19. In the 70S ribosome, L14 and L19 interact and together make contacts with the 16S rRNA in bridges B5 and B8.

Its function is as follows. Binds to 23S rRNA. Forms part of two intersubunit bridges in the 70S ribosome. The chain is Large ribosomal subunit protein uL14 from Lacticaseibacillus casei (strain BL23) (Lactobacillus casei).